Consider the following 366-residue polypeptide: tRNA/tmRNA (uracil-C(5))-methyltransferase (366 aa).

S-adenosyl-L-methionine is bound by residues Gln-190, Tyr-218, Asn-223, Glu-239, and Asp-299. Cys-324 functions as the Nucleophile in the catalytic mechanism. The Proton acceptor role is filled by Glu-358.

Belongs to the class I-like SAM-binding methyltransferase superfamily. RNA M5U methyltransferase family. TrmA subfamily.

It catalyses the reaction uridine(54) in tRNA + S-adenosyl-L-methionine = 5-methyluridine(54) in tRNA + S-adenosyl-L-homocysteine + H(+). The catalysed reaction is uridine(341) in tmRNA + S-adenosyl-L-methionine = 5-methyluridine(341) in tmRNA + S-adenosyl-L-homocysteine + H(+). Dual-specificity methyltransferase that catalyzes the formation of 5-methyluridine at position 54 (m5U54) in all tRNAs, and that of position 341 (m5U341) in tmRNA (transfer-mRNA). The polypeptide is tRNA/tmRNA (uracil-C(5))-methyltransferase (Klebsiella pneumoniae subsp. pneumoniae (strain ATCC 700721 / MGH 78578)).